The primary structure comprises 117 residues: MPRAVNGTIHKNRRKKVLAKAKGFRGGRSKLFRTAKSAVMKAGQWAYRDRRKKKSEFRKLWITRINAAVRENGMSYSKFIHALKTHGINLDRKTLADLAYNHKEVFNAIVEKTKVAK.

It belongs to the bacterial ribosomal protein bL20 family.

Its function is as follows. Binds directly to 23S ribosomal RNA and is necessary for the in vitro assembly process of the 50S ribosomal subunit. It is not involved in the protein synthesizing functions of that subunit. This is Large ribosomal subunit protein bL20 from Leptospira biflexa serovar Patoc (strain Patoc 1 / Ames).